The primary structure comprises 305 residues: Serine/threonine-protein phosphatase PP1-delta (305 aa).

Residues D62, H64, D90, and N122 each coordinate Mn(2+). The Proton donor role is filled by H123. Residues H172 and H247 each coordinate Mn(2+).

The protein belongs to the PPP phosphatase family. Expressed in male germline including spermatocytes, spermatids and spermatozoa.

The protein localises to the chromosome. It localises to the cell projection. The protein resides in the pseudopodium. Its subcellular location is the cytoplasm. It catalyses the reaction O-phospho-L-seryl-[protein] + H2O = L-seryl-[protein] + phosphate. The catalysed reaction is O-phospho-L-threonyl-[protein] + H2O = L-threonyl-[protein] + phosphate. Probable phosphatase which plays a redundant role with gsp-4 in spermatogenesis by regulating sister chromatid segregation during meiosis. In addition, involved in sperm motility by controlling the dynamic disassembly of major sperm proteins (MSP) in the spermatozoan pseudopodium. In Caenorhabditis elegans, this protein is Serine/threonine-protein phosphatase PP1-delta.